A 452-amino-acid polypeptide reads, in one-letter code: Prenyltransferase fsdK (452 aa).

It belongs to the tryptophan dimethylallyltransferase family.

It functions in the pathway mycotoxin biosynthesis. Its function is as follows. Prenyltransferase; part of the gene cluster that mediates the biosynthesis of fusaridione A, a bright yellow trans-fused decalin-containing tetramic acid with antimicrobial activity. The PKS module of fsdS catalyzes the formation of the polyketide unit which is then conjugated to L-tyrosine by the condensation domain of the fsdS NRPS module. Activity of the Dieckmann cyclase domain (RED) results in release of the intermediate fusaridione A. The unstable pyrrolidinedione ring of fusaridione A is opened through a reverse-Dieckmann reaction to afford its ring-opened form. The polypeptide is Prenyltransferase fsdK (Fusarium heterosporum).